Here is a 211-residue protein sequence, read N- to C-terminus: Ubiquitin-conjugating enzyme E2 S-C (211 aa).

The 147-residue stretch at histidine 11–glutamine 157 folds into the UBC core domain. The active-site Glycyl thioester intermediate is the cysteine 95. A disordered region spans residues glycine 158–leucine 211. Residues alanine 197–leucine 211 show a composition bias toward basic residues.

The protein belongs to the ubiquitin-conjugating enzyme family.

The enzyme catalyses S-ubiquitinyl-[E1 ubiquitin-activating enzyme]-L-cysteine + [E2 ubiquitin-conjugating enzyme]-L-cysteine = [E1 ubiquitin-activating enzyme]-L-cysteine + S-ubiquitinyl-[E2 ubiquitin-conjugating enzyme]-L-cysteine.. It participates in protein modification; protein ubiquitination. Its function is as follows. Catalyzes the covalent attachment of ubiquitin to other proteins. Acts as an essential factor of the anaphase promoting complex/cyclosome (APC/C), a cell cycle-regulated ubiquitin ligase that controls progression through mitosis. Acts by specifically elongating 'Lys-11'-linked polyubiquitin chains initiated by the E2 enzyme ube2c/ubch10 on APC/C substrates, enhancing the degradation of APC/C substrates by the proteasome and promoting mitotic exit. This is Ubiquitin-conjugating enzyme E2 S-C (ube2s-c) from Xenopus laevis (African clawed frog).